We begin with the raw amino-acid sequence, 420 residues long: Diaminobutyrate--2-oxoglutarate transaminase (420 aa).

The residue at position 271 (K271) is an N6-(pyridoxal phosphate)lysine.

It belongs to the class-III pyridoxal-phosphate-dependent aminotransferase family. Pyridoxal 5'-phosphate is required as a cofactor.

The enzyme catalyses L-2,4-diaminobutanoate + 2-oxoglutarate = L-aspartate 4-semialdehyde + L-glutamate. It functions in the pathway amine and polyamine biosynthesis; ectoine biosynthesis; L-ectoine from L-aspartate 4-semialdehyde: step 1/3. Its function is as follows. Catalyzes reversively the conversion of L-aspartate beta-semialdehyde (ASA) to L-2,4-diaminobutyrate (DABA) by transamination with L-glutamate. This chain is Diaminobutyrate--2-oxoglutarate transaminase (ectB), found in Streptomyces anulatus (Streptomyces chrysomallus).